An 848-amino-acid chain; its full sequence is Adenylate cyclase (848 aa).

The catalytic stretch occupies residues 1 to 535 (MYLYIETLKQ…DVSHHFPLRL (535 aa)). The interval 541 to 848 (KALYSPCEIR…DAPLLQQYFS (308 aa)) is regulatory. At histidine 609 the chain carries Phosphohistidine; by CRR.

The protein belongs to the adenylyl cyclase class-1 family.

Its subcellular location is the cytoplasm. The enzyme catalyses ATP = 3',5'-cyclic AMP + diphosphate. The polypeptide is Adenylate cyclase (cyaA) (Salmonella typhi).